The following is an 889-amino-acid chain: Protein SEY1 homolog (889 aa).

Residues 1 to 801 (MDTKTQIIDY…ETGAKMSLKN (801 aa)) are Cytoplasmic-facing. The GB1/RHD3-type G domain maps to 31–277 (GFNYNVIAIL…IPSDGFAHYC (247 aa)). Residue 41–48 (GSQSSGKS) participates in GTP binding. Positions 429 to 449 (RKDGKGGSSPSAGDKKDTKDT) are disordered. Residues 679–699 (LDEIMDVLKSKLDEISDNLSS) are a coiled coil. Residues 802–822 (VPLFFWVILLILGWNELLFFT) form a helical membrane-spanning segment. The Lumenal portion of the chain corresponds to 823 to 825 (RFF). Residues 826–846 (FRLNIILPLFLAAAVILSTLV) form a helical membrane-spanning segment. Residues 847–889 (FNGNMEVLSIINKAVFFLAKNSFGVYRQLQAMGGKAAQGAAAD) lie on the Cytoplasmic side of the membrane.

Belongs to the TRAFAC class dynamin-like GTPase superfamily. GB1/RHD3 GTPase family. RHD3 subfamily.

The protein resides in the endoplasmic reticulum membrane. Functionally, probable GTP-binding protein involved in generating and maintaining the structure of the tubular endoplasmic reticulum network. The protein is Protein SEY1 homolog of Plasmodium vivax (strain Salvador I).